The primary structure comprises 313 residues: Hydroxyacylglutathione hydrolase, mitochondrial (313 aa).

Zn(2+) contacts are provided by histidine 107, histidine 109, aspartate 111, histidine 112, histidine 163, and aspartate 187. Substrate is bound by residues 196–198 (KFF) and 226–228 (HEY). Residue histidine 226 coordinates Zn(2+). Basic and acidic residues-rich tracts occupy residues 285 to 294 (VQEHAGERDP) and 301 to 313 (IRKEKDHFKVPKD). Residues 285–313 (VQEHAGERDPISTMGAIRKEKDHFKVPKD) form a disordered region. 302–305 (RKEK) contributes to the substrate binding site.

This sequence belongs to the metallo-beta-lactamase superfamily. Glyoxalase II family. In terms of assembly, monomer. Zn(2+) is required as a cofactor.

It is found in the mitochondrion matrix. It localises to the cytoplasm. The enzyme catalyses an S-(2-hydroxyacyl)glutathione + H2O = a 2-hydroxy carboxylate + glutathione + H(+). The catalysed reaction is (R)-S-lactoylglutathione + H2O = (R)-lactate + glutathione + H(+). In terms of biological role, thiolesterase that catalyzes the hydrolysis of S-D-lactoyl-glutathione to form glutathione and D-lactic acid. The protein is Hydroxyacylglutathione hydrolase, mitochondrial (hagh) of Xenopus tropicalis (Western clawed frog).